Consider the following 258-residue polypeptide: Uridylate cyclase (258 aa).

The region spanning 50–190 (AAIFIDLRGS…DVVNKASKMC (141 aa)) is the Guanylate cyclase domain. Residue Phe-53 participates in a ribonucleoside 5'-triphosphate binding. Residues Asp-55 and Asp-102 each coordinate Mn(2+).

Belongs to the adenylyl cyclase class-4/guanylyl cyclase family. Pyrimidine cyclase subfamily. Homodimer. The cofactor is Mn(2+).

It localises to the cytoplasm. The catalysed reaction is UTP = 3',5'-cyclic UMP + diphosphate. Pycsar (pyrimidine cyclase system for antiphage resistance) provides immunity against bacteriophage. The pyrimidine cyclase (PycC) synthesizes cyclic nucleotides in response to infection; these serve as specific second messenger signals. The signals activate the adjacent effector, leading to bacterial cell death and abortive phage infection. A clade C Pycsar system. Its function is as follows. The pyrimidine cyclase gene of a two-gene Pycsar system, weakly generates cyclic UMP (cUMP) from UTP, has little to no activity on ATP, CTP or GTP. Expression of this and adjacent effector GmPycTM (AC P0DV43) probably confers resistance to bacteriophage. The genes are probably only expressed in response to bacteriophage infection. This Gulbenkiania mobilis protein is Uridylate cyclase.